Reading from the N-terminus, the 423-residue chain is Ferrochelatase, mitochondrial (423 aa).

A mitochondrion-targeting transit peptide spans 1-40; sequence MIRFCPSCFALKRTAPVLNHTSRLGNYFNNTFSKFSVNRM. Cysteine 200 serves as a coordination point for [2Fe-2S] cluster. Aspartate 385 is an active-site residue. Cysteine 405, cysteine 408, and cysteine 413 together coordinate [2Fe-2S] cluster.

Belongs to the ferrochelatase family. As to quaternary structure, monomer. The cofactor is [2Fe-2S] cluster.

It localises to the mitochondrion inner membrane. The protein localises to the cytoplasm. It is found in the nucleus. The enzyme catalyses heme b + 2 H(+) = protoporphyrin IX + Fe(2+). It functions in the pathway porphyrin-containing compound metabolism; protoheme biosynthesis; protoheme from protoporphyrin-IX: step 1/1. Catalyzes the ferrous insertion into protoporphyrin IX. The chain is Ferrochelatase, mitochondrial (hem15) from Schizosaccharomyces pombe (strain 972 / ATCC 24843) (Fission yeast).